A 153-amino-acid polypeptide reads, in one-letter code: MRCPSCQHHGTRVLDSRPVDEGRSIRRRRECEQCHYRFTTFEKVEEMPLIVVKKQGMREEFSRDKILRGLIKACEKRPVALEELEKITQDIERELRNQGVAEVKSETIGEMVMERLSKVDEVAYVRFASVYRQFKDLNVFIEELKELIKKEQR.

A zinc finger lies at C3–C34. The region spanning L49 to V139 is the ATP-cone domain.

This sequence belongs to the NrdR family. The cofactor is Zn(2+).

Functionally, negatively regulates transcription of bacterial ribonucleotide reductase nrd genes and operons by binding to NrdR-boxes. The polypeptide is Transcriptional repressor NrdR (Geobacillus sp. (strain WCH70)).